The following is a 519-amino-acid chain: MNEQQRKQQSQIRTEQANVDRIKNTSSEDMIAKYFQQEYEPQSPDIKQARKRKREDVQFHYDFSIPEDMEKIGHGKKFLIRTYGCQMNEHDTEVMAGILSEMGYESTTVTEEADIILLNTCAIRENAENKVFGEIGHLKPLKLENPDLIIGVCGCMSQEESVVDRILQKHQHIDLIFGTHNIHRLPHLVKEALFGKEMIVEVWSKEGDIIENLPKARKGKIKAWVNIMYGCDKFCTYCIVPMTRGKERSRRPKDIIQEVRHLVAQGYQEVTLLGQNVNAYGKDFEDIEYGLGDLMNDIHKIDIPRVRFTTSHPRDFDDRLIEVLAQGGNLLDHIHLPVQSGSSEILKKMNRKYTREEYLELVRKIRIAMPNATLTTDIIVGFPNETEEQFEETMTLVEEVGFEAAYTFIYSPREGTPAARKKDDVPEEVKKQRLYRLNELVNKQSAASMKDYAGKKVKVLVEGESKKDPEVLAGYTEKNKLVNFKGPKSSIGKIVEVEITETKTWSLNGVMVENTVEVN.

The disordered stretch occupies residues 1–23 (MNEQQRKQQSQIRTEQANVDRIK). The segment covering 7 to 17 (KQQSQIRTEQA) has biased composition (polar residues). The MTTase N-terminal domain maps to 76 to 194 (KKFLIRTYGC…LPHLVKEALF (119 aa)). 6 residues coordinate [4Fe-4S] cluster: C85, C121, C155, C231, C235, and C238. Positions 217-450 (RKGKIKAWVN…VNKQSAASMK (234 aa)) constitute a Radical SAM core domain. Residues 450-513 (KDYAGKKVKV…TWSLNGVMVE (64 aa)) enclose the TRAM domain.

This sequence belongs to the methylthiotransferase family. MiaB subfamily. As to quaternary structure, monomer. [4Fe-4S] cluster serves as cofactor.

It is found in the cytoplasm. The enzyme catalyses N(6)-dimethylallyladenosine(37) in tRNA + (sulfur carrier)-SH + AH2 + 2 S-adenosyl-L-methionine = 2-methylsulfanyl-N(6)-dimethylallyladenosine(37) in tRNA + (sulfur carrier)-H + 5'-deoxyadenosine + L-methionine + A + S-adenosyl-L-homocysteine + 2 H(+). Functionally, catalyzes the methylthiolation of N6-(dimethylallyl)adenosine (i(6)A), leading to the formation of 2-methylthio-N6-(dimethylallyl)adenosine (ms(2)i(6)A) at position 37 in tRNAs that read codons beginning with uridine. The polypeptide is tRNA-2-methylthio-N(6)-dimethylallyladenosine synthase (Oceanobacillus iheyensis (strain DSM 14371 / CIP 107618 / JCM 11309 / KCTC 3954 / HTE831)).